A 313-amino-acid polypeptide reads, in one-letter code: Ankyrin repeat family A protein 2 (313 aa).

5 ANK repeats span residues 148-180 (ANSLSVHQLAAQGEMLYLATRIEQENVINHTDE), 181-213 (EGFTPLMWAAAHGQIAVVEFLLQNGADPQLLGK), 214-246 (GRESALSLACSKGYTDIVKMLLDCGVDVNEYDW), 247-279 (NGGTPLLYAVHGNHVKCVKMLLESGADPTIETD), and 280-313 (SGYNSMDLAVALGYRSVQQVIESHLLKLLQNIKE).

In terms of assembly, interacts (via ANK repeats) with CCDC8 (via PxLPxI/L motif); mediates the interaction with the 3M complex which is composed of CCDC8, CUL7 and OBSL1. Interacts (via ANK repeats) with HDAC4 (via PxLPxI/L motif). Interacts (via ANK repeats) with HDAC5 (via PxLPxI/L motif). Interacts (via ANK repeats) with LRP2/megalin (via PxLPxI/L motif). Interacts (via ANK repeats) with RFX7 (via PxLPxI/L motif). Interacts with AHRR. Interacts with NEK6.

Its subcellular location is the cytoplasm. It localises to the cytoskeleton. The protein resides in the membrane. Its function is as follows. May regulate the interaction between the 3M complex and the histone deacetylases HDAC4 and HDAC5. May also regulate LRP2/megalin. The polypeptide is Ankyrin repeat family A protein 2 (ANKRA2) (Homo sapiens (Human)).